Here is a 208-residue protein sequence, read N- to C-terminus: Uracil phosphoribosyltransferase (208 aa).

5-phospho-alpha-D-ribose 1-diphosphate is bound by residues Arg78, Arg103, and 130 to 138 (DPMLATGGS). Residues Ile193 and 198-200 (GDA) each bind uracil. Position 199 (Asp199) interacts with 5-phospho-alpha-D-ribose 1-diphosphate.

Belongs to the UPRTase family. Mg(2+) serves as cofactor.

The catalysed reaction is UMP + diphosphate = 5-phospho-alpha-D-ribose 1-diphosphate + uracil. It participates in pyrimidine metabolism; UMP biosynthesis via salvage pathway; UMP from uracil: step 1/1. Its activity is regulated as follows. Allosterically activated by GTP. Its function is as follows. Catalyzes the conversion of uracil and 5-phospho-alpha-D-ribose 1-diphosphate (PRPP) to UMP and diphosphate. The sequence is that of Uracil phosphoribosyltransferase from Mannheimia succiniciproducens (strain KCTC 0769BP / MBEL55E).